The following is a 548-amino-acid chain: Chaperonin GroEL (548 aa).

Residues 30–33, lysine 51, 87–91, glycine 415, 479–481, and aspartate 495 contribute to the ATP site; these read TLGP, DGTTT, and NAA.

The protein belongs to the chaperonin (HSP60) family. As to quaternary structure, forms a cylinder of 14 subunits composed of two heptameric rings stacked back-to-back. Interacts with the co-chaperonin GroES.

It localises to the cytoplasm. It carries out the reaction ATP + H2O + a folded polypeptide = ADP + phosphate + an unfolded polypeptide.. Functionally, together with its co-chaperonin GroES, plays an essential role in assisting protein folding. The GroEL-GroES system forms a nano-cage that allows encapsulation of the non-native substrate proteins and provides a physical environment optimized to promote and accelerate protein folding. In Escherichia fergusonii (strain ATCC 35469 / DSM 13698 / CCUG 18766 / IAM 14443 / JCM 21226 / LMG 7866 / NBRC 102419 / NCTC 12128 / CDC 0568-73), this protein is Chaperonin GroEL.